The primary structure comprises 227 residues: [D-Ala2]-deltorphins (227 aa).

A signal peptide spans 1–20 (MSFLKKSLLLVLFLGLVSHS). A propeptide spanning residues 21–46 (VCKEEKRETEEENENEEENHEVGSEM) is cleaved from the precursor. Residues 22–227 (CKEEKRETEE…DVVGGEAKKM (206 aa)) form a disordered region. Positions 30–39 (EEENENEEEN) are enriched in acidic residues. Residue alanine 50 is modified to D-alanine (Ala). A propeptide spanning residues 57–75 (DTEEKNENEEENQEEGSEM) is cleaved from the precursor. Residues 62 to 72 (NENEEENQEEG) show a composition bias toward acidic residues. Residues 73 to 87 (SEMKRYAFGYPKREP) show a composition bias toward basic and acidic residues. Position 79 is a D-alanine (Ala) (alanine 79). A propeptide spanning residues 86 to 104 (EPEEENENEEENHEEGSEM) is cleaved from the precursor. Positions 88–98 (EEENENEEENH) are enriched in acidic residues. The segment covering 99-108 (EEGSEMKRYA) has biased composition (basic and acidic residues). The residue at position 108 (alanine 108) is a D-alanine (Ala). Glycine 113 carries the post-translational modification Glycine amide. Positions 115 to 140 (EAKKMKREPEEENENEEENHEEGSEM) are excised as a propeptide. The segment covering 124–134 (EEENENEEENH) has biased composition (acidic residues). The span at 135–144 (EEGSEMKRYA) shows a compositional bias: basic and acidic residues. At alanine 144 the chain carries D-alanine (Ala). At glycine 149 the chain carries Glycine amide. A propeptide spanning residues 151 to 176 (EAKKMKREPEEENENEEENHEEGSEM) is cleaved from the precursor. Residues 160–170 (EEENENEEENH) are compositionally biased toward acidic residues. Over residues 171 to 180 (EEGSEMKRYA) the composition is skewed to basic and acidic residues. At alanine 180 the chain carries D-alanine (Ala). Glycine amide is present on glycine 185. Residues 187–212 (EAKKMKREPEEENENEEENHEEGSEM) constitute a propeptide that is removed on maturation. Residues 196–206 (EEENENEEENH) are compositionally biased toward acidic residues. Over residues 207-216 (EEGSEMKRYA) the composition is skewed to basic and acidic residues. A D-alanine (Ala) modification is found at alanine 216. Residue glycine 221 is modified to Glycine amide. A propeptide spanning residues 223-227 (EAKKM) is cleaved from the precursor.

It belongs to the frog skin active peptide (FSAP) family. Dermorphin subfamily. As to expression, expressed by the skin glands.

It is found in the secreted. Its function is as follows. Deltorphin is a heptapeptide with a very potent opiate-like activity. Has high affinity and selectivity for delta-type opioid receptors. The two dermorphin-like peptides have a similar affinity and selectivity for the mu opioid receptor as dermorphin. The sequence is that of [D-Ala2]-deltorphins from Phyllomedusa bicolor (Two-colored leaf frog).